The sequence spans 377 residues: Alkane 1-monooxygenase 2 (377 aa).

Transmembrane regions (helical) follow at residues 17–37, 43–63, 87–107, and 116–136; these read GYWIWLIAVLGIPLSYWWSLG, AWPWLVISVVFGLIPILDAIV, VLSLATVPLLLGMLVWSGWIL, and VGQLGWILSVGTVMGAIGITV. The Fe cation site is built by H138, H142, H168, H172, and H173. A helical membrane pass occupies residues 236–256; sequence ALFLLGFSLAFGWLGAIFFLG. Fe cation is bound by residues H312, H315, and H316.

This sequence belongs to the fatty acid desaturase type 1 family. AlkB subfamily. Fe(3+) serves as cofactor.

It is found in the cell inner membrane. It carries out the reaction octane + 2 reduced [rubredoxin] + O2 + 2 H(+) = 2 oxidized [rubredoxin] + octan-1-ol + H2O. It participates in hydrocarbon metabolism; alkane degradation. In terms of biological role, catalyzes the hydroxylation of n-alkanes in the presence of a NADH-rubredoxin reductase and rubredoxin. It preferably hydroxylases C12-C20 hydrocarbons. This Pseudomonas aeruginosa (strain ATCC 15692 / DSM 22644 / CIP 104116 / JCM 14847 / LMG 12228 / 1C / PRS 101 / PAO1) protein is Alkane 1-monooxygenase 2 (alkB2).